The sequence spans 605 residues: UvrABC system protein C (605 aa).

The 80-residue stretch at 13-92 folds into the GIY-YIG domain; the sequence is SEPGVYLMKD…IKRYRPKYNV (80 aa). Residues 205–240 form the UVR domain; that stretch reads EKLMELLKEKMNESSMNFRFEEAAVYRDKIKSLEEM.

This sequence belongs to the UvrC family. As to quaternary structure, interacts with UvrB in an incision complex.

The protein localises to the cytoplasm. The UvrABC repair system catalyzes the recognition and processing of DNA lesions. UvrC both incises the 5' and 3' sides of the lesion. The N-terminal half is responsible for the 3' incision and the C-terminal half is responsible for the 5' incision. The chain is UvrABC system protein C from Clostridioides difficile (strain 630) (Peptoclostridium difficile).